A 225-amino-acid chain; its full sequence is GTP cyclohydrolase 1 (225 aa).

Residues 1–12 are compositionally biased toward basic and acidic residues; sequence MERSKQSHDNQA. The tract at residues 1–59 is disordered; it reads MERSKQSHDNQADSRPTTNESSLNGHFDGLVKKTPGMWDVKGRGTAGESSSHTGSSVVE. Polar residues-rich tracts occupy residues 13–24 and 47–58; these read DSRPTTNESSLN and GESSSHTGSSVV. C149, H152, and C220 together coordinate Zn(2+).

It belongs to the GTP cyclohydrolase I family. As to quaternary structure, toroid-shaped homodecamer, composed of two pentamers of five dimers.

It localises to the cytoplasm. The protein localises to the nucleus. It carries out the reaction GTP + H2O = 7,8-dihydroneopterin 3'-triphosphate + formate + H(+). It participates in cofactor biosynthesis; 7,8-dihydroneopterin triphosphate biosynthesis; 7,8-dihydroneopterin triphosphate from GTP: step 1/1. GTP shows a positive allosteric effect, and tetrahydrobiopterin inhibits the enzyme activity. Zinc is required for catalytic activity. Inhibited by Mg(2+). Its function is as follows. May positively regulate nitric oxide synthesis in endothelial cells. May be involved in dopamine synthesis. May modify pain sensitivity and persistence. This Oncorhynchus mykiss (Rainbow trout) protein is GTP cyclohydrolase 1 (gch1).